Here is a 213-residue protein sequence, read N- to C-terminus: Chloramphenicol acetyltransferase 3 (213 aa).

Histidine 189 acts as the Proton acceptor in catalysis.

This sequence belongs to the chloramphenicol acetyltransferase family. In terms of assembly, homotrimer.

It carries out the reaction chloramphenicol + acetyl-CoA = chloramphenicol 3-acetate + CoA. Functionally, this enzyme is an effector of chloramphenicol resistance in bacteria. This chain is Chloramphenicol acetyltransferase 3 (cat3), found in Escherichia coli.